Here is a 375-residue protein sequence, read N- to C-terminus: Aminomethyltransferase (375 aa).

Belongs to the GcvT family. The glycine cleavage system is composed of four proteins: P, T, L and H.

The catalysed reaction is N(6)-[(R)-S(8)-aminomethyldihydrolipoyl]-L-lysyl-[protein] + (6S)-5,6,7,8-tetrahydrofolate = N(6)-[(R)-dihydrolipoyl]-L-lysyl-[protein] + (6R)-5,10-methylene-5,6,7,8-tetrahydrofolate + NH4(+). Its function is as follows. The glycine cleavage system catalyzes the degradation of glycine. This is Aminomethyltransferase from Cupriavidus metallidurans (strain ATCC 43123 / DSM 2839 / NBRC 102507 / CH34) (Ralstonia metallidurans).